We begin with the raw amino-acid sequence, 492 residues long: Stromelysin-3 (492 aa).

The signal sequence occupies residues Met-1 to Ala-35. Residues Arg-36 to Arg-101 constitute a propeptide, activation peptide. The Cysteine switch signature appears at Leu-82–Leu-89. The Zn(2+) site is built by Cys-84, His-168, and Asp-170. Residues Asp-175, Gly-176, Gly-178, and Ile-180 each contribute to the Ca(2+) site. Residues His-183, His-196, and His-219 each coordinate Zn(2+). Glu-220 is an active-site residue. Positions 223 and 229 each coordinate Zn(2+). 4 Hemopexin repeats span residues Pro-295–Leu-343, Pro-344–Leu-386, Gly-388–Val-436, and Pro-437–Cys-484. Cys-298 and Cys-484 are disulfide-bonded.

Belongs to the peptidase M10A family. It depends on Ca(2+) as a cofactor. The cofactor is Zn(2+). The precursor is cleaved by a furin endopeptidase. As to expression, specifically expressed in the mammary gland during apoptosis.

Its subcellular location is the secreted. It is found in the extracellular space. The protein localises to the extracellular matrix. May play an important role in the progression of epithelial malignancies. This is Stromelysin-3 (Mmp11) from Mus musculus (Mouse).